A 483-amino-acid chain; its full sequence is Glutamate--tRNA ligase (483 aa).

Positions 9–19 match the 'HIGH' region motif; sequence PSPTGYLHIGN. The short motif at 250–254 is the 'KMSKS' region element; that stretch reads KLSKR. ATP is bound at residue K253.

This sequence belongs to the class-I aminoacyl-tRNA synthetase family. Glutamate--tRNA ligase type 1 subfamily. As to quaternary structure, monomer.

It is found in the cytoplasm. It carries out the reaction tRNA(Glu) + L-glutamate + ATP = L-glutamyl-tRNA(Glu) + AMP + diphosphate. In terms of biological role, catalyzes the attachment of glutamate to tRNA(Glu) in a two-step reaction: glutamate is first activated by ATP to form Glu-AMP and then transferred to the acceptor end of tRNA(Glu). In Blochmanniella floridana, this protein is Glutamate--tRNA ligase.